The sequence spans 317 residues: UV DNA damage endonuclease (317 aa).

The protein belongs to the uve1/UvsE family.

Functionally, component in a DNA repair pathway. Removal of UV LIGHT damaged nucleotides. Recognizes pyrimidine dimers and cleave a phosphodiester bond immediately 5' to the lesion. This Bacillus cereus (strain ATCC 10987 / NRS 248) protein is UV DNA damage endonuclease.